Consider the following 584-residue polypeptide: MQFGELVKTLAAVESTTQRTTMVKLLTSLLKRARPDEVDKIVYFVLGDLKPPWEGVELGVAEKLCLRAVSKAAGTPLSELEAVYKRTGDVGEAARRALSAAKRPGLLAFGQQKPLEVSEVYDTLLKVAKAAGEGAQDMKISLLASLFARATPEEAKYIARFVVGKLRLGVADMTLLEALSEAFGVGKEALERAYHVWPDMGKLARHVAEGRPLEEVKITPGVPVLPMLAQRLSSASEILAKLGGAAVCEYKYDGERAQIHISGGSVKIFSRRLEDITHAYPDVVKAVKESVAAGEAILEGEIVAVDPDTGDMLPFQELMHRKRKHEVAAAVESYPAVLNLFDVLYLDGEDLTGEPLIYRRLRLSEVVHETEKVSIARWRLFDDPGEVDVFFHEAVSLGMEGLVCKSPTSIYEMGARGWNWIKYKRDYKSEMIDTVDLVVVGAFYGRGKRAGLYGAFLLAAYDPQTDMFYTVCKVGSGFTDADLKKMYEVLQPYKIPHRHPRVVSKMTPDVWFTPQVVIEVIGAEITLSPLHTCCLGAVRPGVGLAIRFPRFTGRYRTDKSPEQATTPAEMVELYKRQKKVAQPE.

Glu-249 provides a ligand contact to ATP. The N6-AMP-lysine intermediate role is filled by Lys-251. Positions 256, 271, 301, 341, 416, and 422 each coordinate ATP.

The protein belongs to the ATP-dependent DNA ligase family. Mg(2+) is required as a cofactor.

It carries out the reaction ATP + (deoxyribonucleotide)n-3'-hydroxyl + 5'-phospho-(deoxyribonucleotide)m = (deoxyribonucleotide)n+m + AMP + diphosphate.. Functionally, DNA ligase that seals nicks in double-stranded DNA during DNA replication, DNA recombination and DNA repair. The protein is DNA ligase of Pyrobaculum neutrophilum (strain DSM 2338 / JCM 9278 / NBRC 100436 / V24Sta) (Thermoproteus neutrophilus).